We begin with the raw amino-acid sequence, 186 residues long: Orotate phosphoribosyltransferase (186 aa).

5-phospho-alpha-D-ribose 1-diphosphate-binding positions include Arg93, Lys94, Lys97, His99, and 119–127 (EDVTTTGGS). Orotate is bound by residues Thr123 and Arg151.

Belongs to the purine/pyrimidine phosphoribosyltransferase family. PyrE subfamily. Homodimer. Mg(2+) is required as a cofactor.

The catalysed reaction is orotidine 5'-phosphate + diphosphate = orotate + 5-phospho-alpha-D-ribose 1-diphosphate. It participates in pyrimidine metabolism; UMP biosynthesis via de novo pathway; UMP from orotate: step 1/2. Catalyzes the transfer of a ribosyl phosphate group from 5-phosphoribose 1-diphosphate to orotate, leading to the formation of orotidine monophosphate (OMP). This Pyrococcus horikoshii (strain ATCC 700860 / DSM 12428 / JCM 9974 / NBRC 100139 / OT-3) protein is Orotate phosphoribosyltransferase.